The following is a 1862-amino-acid chain: Ankyrin-1 (1862 aa).

The interval 1–827 (MGFCKADAAT…DELVGSKAER (827 aa)) is 89 kDa domain. ANK repeat units follow at residues 40-69 (NGLN…ILET), 73-102 (KGNT…NVNA), 106-135 (KGFT…NQNV), 139-168 (DGFT…KGKV), 170-197 (LPAL…NPDV), 201-230 (TGFT…SVNF), 234-263 (NGIT…QIET), 267-296 (DELT…PIQA), 300-329 (NGLS…EIDD), 333-362 (DHLT…KPNS), 366-395 (NGFT…SIDA), 399-428 (SGLT…SPNV), 432-461 (KVET…KANA), 465-494 (DDQT…SPNL), 498-527 (AGHT…SQAC), 531-560 (KGFT…HPNA), 564-593 (NGLT…SPHS), 597-626 (NGYT…SANA), 630-659 (QGVT…NGNL), 663-692 (SGLT…TVDA), 696-725 (MGYT…DVNA), 729-758 (LGYS…SPNE), and 762-791 (NGTT…ETSV). A Phosphoserine modification is found at K55. At N101 the chain carries (3S)-3-hydroxyasparagine; by HIF1AN; partial. N229 bears the (3S)-3-hydroxyasparagine; by HIF1AN mark. Phosphoserine is present on S425. (3S)-3-hydroxyasparagine; by HIF1AN occurs at positions 427 and 460. (3S)-3-hydroxyasparagine; by HIF1AN occurs at positions 625 and 658. Residue D691 is modified to (3S)-3-hydroxyaspartate; by HIF1AN. (3S)-3-hydroxyasparagine; by HIF1AN is present on N724. Phosphoserine is present on S755. A (3S)-3-hydroxyasparagine; by HIF1AN modification is found at N757. Phosphoserine is present on residues S777, S813, S830, and S852. The disordered stretch occupies residues 812 to 834 (VSEDEGDELVGSKAERRDSRDVG). Residues 824–834 (KAERRDSRDVG) are compositionally biased toward basic and acidic residues. Position 862 is a phosphothreonine (T862). Residues 872 to 900 (DQEQASKEYDEDSLIPSSPATETSDNISP) are disordered. Residues 886-900 (IPSSPATETSDNISP) show a composition bias toward polar residues. 2 consecutive ZU5 domains span residues 909 to 1064 (FLVS…IMSR) and 1066 to 1212 (CQDY…LSDC). The residue at position 957 (T957) is a Phosphothreonine. A Phosphotyrosine modification is found at Y1069. S1078 carries the post-translational modification Phosphoserine. The tract at residues 1197–1331 (ANFTTNVSAR…PVKVRDSSRE (135 aa)) is UPA domain. Phosphothreonine occurs at positions 1374 and 1376. A phosphoserine mark is found at S1386 and S1388. Positions 1387 to 1862 (ESRLGFTSDT…KRASLKRGKQ (476 aa)) are 55 kDa regulatory domain. T1396 carries the phosphothreonine modification. The 85-residue stretch at 1399-1483 (VEMRMAVIRE…EIVNMLEGSG (85 aa)) folds into the Death domain. Residues S1424, S1473, and S1482 each carry the phosphoserine modification. The interval 1481–1506 (GSGRQSRNLKPERRHGDREYSLSPSQ) is disordered. Over residues 1489–1500 (LKPERRHGDREY) the composition is skewed to basic and acidic residues. Phosphoserine is present on residues S1519, S1529, and S1612. 2 disordered regions span residues 1598-1720 (EGAH…GPHS) and 1744-1767 (VSTR…KEPS). Residues 1637–1647 (EGQRSEKKRQE) show a composition bias toward basic and acidic residues. The segment covering 1648 to 1666 (VSGTEQDTETEVSLVSGQQ) has biased composition (polar residues). S1660, S1675, and S1685 each carry phosphoserine. Over residues 1681 to 1694 (VLDRSQARTLDWDK) the composition is skewed to basic and acidic residues. Residues 1695–1720 (QGSTAVHPQEATQSSWQEEVTQGPHS) show a composition bias toward polar residues.

As to quaternary structure, component of the ankyrin-1 complex in the erythrocyte, composed of ANK1, RHCE, RHAG, SLC4A1, EPB42, GYPA, GYPB and AQP1. Interacts with a number of integral membrane proteins and cytoskeletal proteins. Interacts (via N-terminus) with SPTB/spectrin (beta chain). Also interacts with TTN/titin. Isoform Mu17 interacts with OBSCN isoform 3/obscurin. Interacts with HIF1AN. Interacts (via ANK 1-5 repeats) with RHCE; this interaction mediates the primary membrane attachment site for ANK1. Interacts (via ANK 1-2 repeats) with AQP1 (via the N-terminal). Interacts (via ANK 1-13 repeats) with EPB42. Interacts directly with SLC4A1 (via the cytoplasmic domain); this interaction is mediated by the SLC4A1 Band 3-II and Band 3-III dimers. Post-translationally, regulated by phosphorylation. Acylated by palmitic acid group(s). In terms of processing, hydroxylated by HIF1AN at several asparagine and 1 aspartate residue within ANK repeat region; hydroxylation seems to increase the conformational stability of this region and may also modulate protein-protein interactions mediated by the ANK repeat region.

It localises to the cytoplasm. The protein resides in the cytoskeleton. The protein localises to the membrane. It is found in the sarcoplasmic reticulum. Functionally, component of the ankyrin-1 complex, a multiprotein complex involved in the stability and shape of the erythrocyte membrane. Attaches integral membrane proteins to cytoskeletal elements; binds to the erythrocyte membrane protein band 4.2, to Na-K ATPase, to the lymphocyte membrane protein GP85, and to the cytoskeletal proteins fodrin, tubulin, vimentin and desmin. Erythrocyte ankyrins also link spectrin (beta chain) to the cytoplasmic domain of the erythrocytes anion exchange protein; they retain most or all of these binding functions. The polypeptide is Ankyrin-1 (Mus musculus (Mouse)).